Consider the following 245-residue polypeptide: Triosephosphate isomerase (245 aa).

9 to 11 is a binding site for substrate; the sequence is NWK. Catalysis depends on His-92, which acts as the Electrophile. Residue Glu-164 is the Proton acceptor of the active site. Residues Gly-170, Ser-209, and 230–231 contribute to the substrate site; that span reads GG.

Belongs to the triosephosphate isomerase family. As to quaternary structure, homodimer.

Its subcellular location is the cytoplasm. The catalysed reaction is D-glyceraldehyde 3-phosphate = dihydroxyacetone phosphate. It functions in the pathway carbohydrate biosynthesis; gluconeogenesis. Its pathway is carbohydrate degradation; glycolysis; D-glyceraldehyde 3-phosphate from glycerone phosphate: step 1/1. In terms of biological role, involved in the gluconeogenesis. Catalyzes stereospecifically the conversion of dihydroxyacetone phosphate (DHAP) to D-glyceraldehyde-3-phosphate (G3P). This is Triosephosphate isomerase from Cupriavidus pinatubonensis (strain JMP 134 / LMG 1197) (Cupriavidus necator (strain JMP 134)).